We begin with the raw amino-acid sequence, 254 residues long: Alcohol dehydrogenase (254 aa).

F10–L33 provides a ligand contact to NAD(+). S138 is a substrate binding site. Y151 serves as the catalytic Proton acceptor.

This sequence belongs to the short-chain dehydrogenases/reductases (SDR) family. Homodimer.

It carries out the reaction a primary alcohol + NAD(+) = an aldehyde + NADH + H(+). The catalysed reaction is a secondary alcohol + NAD(+) = a ketone + NADH + H(+). The polypeptide is Alcohol dehydrogenase (Adh) (Drosophila differens (Fruit fly)).